The following is a 198-amino-acid chain: Recombination protein RecR (198 aa).

The segment at 57–72 adopts a C4-type zinc-finger fold; it reads CSICGNLTESDPCAIC. The Toprim domain maps to 80–175; the sequence is TTILVVEESK…KVTRLARGLA (96 aa).

This sequence belongs to the RecR family.

Its function is as follows. May play a role in DNA repair. It seems to be involved in an RecBC-independent recombinational process of DNA repair. It may act with RecF and RecO. The protein is Recombination protein RecR of Lactococcus lactis subsp. cremoris (strain MG1363).